The chain runs to 625 residues: Ankyrin repeat domain-containing protein oryK (625 aa).

ANK repeat units lie at residues 1–27, 31–60, 62–89, 90–119, 162–195, 202–232, 500–530, 534–562, and 568–598; these read MDIYEAASQGRIDAIKFAVEQGCDVDG, DGKTPLWFAVQSGQPEACRFLMSLGAGRGP, NPSLLEVAVGGGYADIVALLWPHCNAER, EHRSLKTAISLGFHEIADFLIETGAFEYQD, FFDYALLLATKAGRNAGLRLVEFLLGESMPDVNC, QFETPLTAAAEKGNLEILATLIDHPNIDLTI, DTRCPLSWAAKSHNAPLVNALLRSPQVNVNF, SDRTPLLYAIAVNDRPIVERLLNHRDIDL, and EGRTAIFYAAQGGDLSIVQLLIGTQNVDFSI.

The protein operates within secondary metabolite biosynthesis. In terms of biological role, ankyrin repeat domain-containing protein; part of the gene cluster that mediates the biosynthesis of oryzines, natural products with an unusual maleidride backbone. The two subunits of the fungal fatty acid synthase oryfasA and oryfasB probably form octenoic acid. This fatty acid is most likely activated by the acyl-CoA ligase oryP to give octenyl-CoA before the citrate synthase-like protein oryE catalyzes condensation with oxaloacetate to form tricarboxylic acid. The next steps of the pathways are conjectural, but a favorite possible route has been proposed, beginning with decarboxylation and concomitant dehydration by the decarboxylase oryM, followed by tautomerization, which may lead to the production of a diene intermediate. Reduction of this diene intermediate could give the known metabolite piliformic acid. On the pathway to oryzine B and oryzine A, however, hydroxylation of the diene by the alpha-ketoglutarate-dependent dioxygenase oryG and lactonisation by the lactonohydrolases oryH or oryL could give oryzine B directly. Finally, enoyl reduction by the dehydrogenase oryD would then convert oryzine B into oryzine A. This Aspergillus oryzae (strain ATCC 42149 / RIB 40) (Yellow koji mold) protein is Ankyrin repeat domain-containing protein oryK.